The following is a 314-amino-acid chain: DegV domain-containing protein XCC3382 (314 aa).

The region spanning 3–307 (IGIVVDSACD…KGALAVAFAA (305 aa)) is the DegV domain. Residues threonine 63 and serine 96 each coordinate hexadecanoate.

Functionally, may bind long-chain fatty acids, such as palmitate, and may play a role in lipid transport or fatty acid metabolism. In Xanthomonas campestris pv. campestris (strain ATCC 33913 / DSM 3586 / NCPPB 528 / LMG 568 / P 25), this protein is DegV domain-containing protein XCC3382.